A 153-amino-acid chain; its full sequence is Ribosome maturation factor RimP (153 aa).

It belongs to the RimP family.

The protein localises to the cytoplasm. Required for maturation of 30S ribosomal subunits. In Clostridioides difficile (strain 630) (Peptoclostridium difficile), this protein is Ribosome maturation factor RimP.